The primary structure comprises 318 residues: MVFFPHRHLIGIKGLTEQDITYLLDKADEAVKISRRREKKTSTLRGLTQINLFFEASTRTQASFELAGKRLGADVMNMSVGNSSVKKGETLIDTAMTLNAMRPDVLVIRHSSAGAAALLAQKVSCSVVNAGDGQHEHPTQALLDALTIRRAKGKLSRIIVAICGDVLHSRVARSNILLLNAMGARVRVVAPATLLPAGIAEMGVEVFHSMKEGLKDADVVMMLRLQRERMSGAFVPSVREYYHFYGLDAETLKAAKDDALVMHPGPMNRGVEIASEVADGPQSVIAEQVEMGVAVRMAVMETLLVSQNQGPRTDGMMA.

Carbamoyl phosphate-binding residues include arginine 59 and threonine 60. Lysine 87 lines the L-aspartate pocket. Carbamoyl phosphate is bound by residues arginine 109, histidine 137, and glutamine 140. Residues arginine 170 and arginine 224 each coordinate L-aspartate. Glycine 265 and proline 266 together coordinate carbamoyl phosphate.

Belongs to the aspartate/ornithine carbamoyltransferase superfamily. ATCase family. Heterododecamer (2C3:3R2) of six catalytic PyrB chains organized as two trimers (C3), and six regulatory PyrI chains organized as three dimers (R2).

The enzyme catalyses carbamoyl phosphate + L-aspartate = N-carbamoyl-L-aspartate + phosphate + H(+). The protein operates within pyrimidine metabolism; UMP biosynthesis via de novo pathway; (S)-dihydroorotate from bicarbonate: step 2/3. Its function is as follows. Catalyzes the condensation of carbamoyl phosphate and aspartate to form carbamoyl aspartate and inorganic phosphate, the committed step in the de novo pyrimidine nucleotide biosynthesis pathway. The protein is Aspartate carbamoyltransferase catalytic subunit of Rhizobium etli (strain ATCC 51251 / DSM 11541 / JCM 21823 / NBRC 15573 / CFN 42).